Here is a 197-residue protein sequence, read N- to C-terminus: Holliday junction branch migration complex subunit RuvA (197 aa).

Positions 1–64 (MYEYIKGTYM…EDFIGLYGFG (64 aa)) are domain I. The segment at 65–143 (SKEELELFNK…VNLDEGIQTD (79 aa)) is domain II. Residues 144 to 149 (SNDIKV) are flexible linker. A domain III region spans residues 149 to 197 (VSSKILEEAKEALMSLGYSEKECEKALKNVEEKESLEIIIKESLKFLMN).

It belongs to the RuvA family. Homotetramer. Forms an RuvA(8)-RuvB(12)-Holliday junction (HJ) complex. HJ DNA is sandwiched between 2 RuvA tetramers; dsDNA enters through RuvA and exits via RuvB. An RuvB hexamer assembles on each DNA strand where it exits the tetramer. Each RuvB hexamer is contacted by two RuvA subunits (via domain III) on 2 adjacent RuvB subunits; this complex drives branch migration. In the full resolvosome a probable DNA-RuvA(4)-RuvB(12)-RuvC(2) complex forms which resolves the HJ.

The protein resides in the cytoplasm. Its function is as follows. The RuvA-RuvB-RuvC complex processes Holliday junction (HJ) DNA during genetic recombination and DNA repair, while the RuvA-RuvB complex plays an important role in the rescue of blocked DNA replication forks via replication fork reversal (RFR). RuvA specifically binds to HJ cruciform DNA, conferring on it an open structure. The RuvB hexamer acts as an ATP-dependent pump, pulling dsDNA into and through the RuvAB complex. HJ branch migration allows RuvC to scan DNA until it finds its consensus sequence, where it cleaves and resolves the cruciform DNA. This chain is Holliday junction branch migration complex subunit RuvA, found in Hathewaya histolytica (Clostridium histolyticum).